Here is a 350-residue protein sequence, read N- to C-terminus: Flap endonuclease 1 (350 aa).

The tract at residues 1–101 is N-domain; the sequence is MGVNLRELIP…REVEERLRRK (101 aa). Residues aspartate 30, aspartate 83, glutamate 155, glutamate 157, aspartate 176, aspartate 178, and aspartate 239 each coordinate Mg(2+). The segment at 119–261 is I-domain; it reads EARKYAMMAA…TALRLVKSLG (143 aa). The segment at 341–349 is interaction with PCNA; the sequence is RQSRLDMWF.

It belongs to the XPG/RAD2 endonuclease family. FEN1 subfamily. Interacts with PCNA. PCNA stimulates the nuclease activity without altering cleavage specificity. It depends on Mg(2+) as a cofactor.

In terms of biological role, structure-specific nuclease with 5'-flap endonuclease and 5'-3' exonuclease activities involved in DNA replication and repair. During DNA replication, cleaves the 5'-overhanging flap structure that is generated by displacement synthesis when DNA polymerase encounters the 5'-end of a downstream Okazaki fragment. Binds the unpaired 3'-DNA end and kinks the DNA to facilitate 5' cleavage specificity. Cleaves one nucleotide into the double-stranded DNA from the junction in flap DNA, leaving a nick for ligation. Also involved in the base excision repair (BER) pathway. Acts as a genome stabilization factor that prevents flaps from equilibrating into structures that lead to duplications and deletions. Also possesses 5'-3' exonuclease activity on nicked or gapped double-stranded DNA. This Aeropyrum pernix (strain ATCC 700893 / DSM 11879 / JCM 9820 / NBRC 100138 / K1) protein is Flap endonuclease 1.